The primary structure comprises 579 residues: Folliculin (579 aa).

The segment at 31–82 is disordered; it reads QGAGSGDSPDQVEQAEEEEGGIQMSSRVRAHSPAEGASSESSSPGPKKSDMC. Phosphoserine is present on residues Ser62 and Ser73. Positions 63 to 76 are enriched in low complexity; sequence PAEGASSESSSPGP. One can recognise a uDENN FLCN/SMCR8-type domain in the interval 86–242; sequence RSLAVGHPGY…RNGNAARSLT (157 aa). Residues 287-310 are a coiled coil; that stretch reads EKLADLEEESESWDNSEAEEEEKA. Acidic residues predominate over residues 294-308; that stretch reads EESESWDNSEAEEEE. The tract at residues 294 to 323 is disordered; sequence EESESWDNSEAEEEEKAPVTPEGAEGRELT. Phosphoserine occurs at positions 302, 406, 537, 542, and 571. The cDENN FLCN/SMCR8-type domain occupies 339–491; the sequence is QPPKLTGFKS…ILNKIEAALT (153 aa). The dDENN FLCN/SMCR8-type domain maps to 493-558; the sequence is QNLSVDVVDQ…LLKFWMTGLS (66 aa).

This sequence belongs to the folliculin family. As to quaternary structure, interacts (via C-terminus) with FNIP1 or FNIP2 (via C-terminus). Component of the lysosomal folliculin complex (LFC), composed of FLCN, FNIP1 (or FNIP2), RagA/RRAGA or RagB/RRAGB GDP-bound, RagC/RRAGC or RagD/RRAGD GTP-bound, and Ragulator. Interaction with FNIP1 or FNIP2 mediates indirect interaction with the PRKAA1, PRKAB1 and PRKAG1 subunits of 5'-AMP-activated protein kinase (AMPK). Interacts with HSP90AA1 in the presence of FNIP1. Interacts with HSP70, STUB1, CDC37, AHSA1, CCT2, STIP1, PTGES3 and PPP5C. Interacts with GABARAP; interaction takes place in the presence of FNIP1 and/or FNIP2. Interacts with RILP; the interaction is direct and promotes association between RILP and RAB34. Interacts with KIF3A and KIF3B. Interacts with lactate dehydrogenase LDHA, but not LDHB; the interaction is direct, may preferentially bind LDHA dimers rather than tetramers, and regulates LDHA activity, acting as an uncompetitive inhibitor. Post-translationally, phosphorylation by ULK1 modulates the interaction with GABARAP and is required to regulate autophagy. Highly expressed in adult heart, pancreas, and prostate with moderate expression in adult brain, kidney, liver, adipose tissue and lung.

It is found in the lysosome membrane. Its subcellular location is the cytoplasm. It localises to the cytosol. The protein localises to the cell projection. The protein resides in the cilium. It is found in the cytoskeleton. Its subcellular location is the microtubule organizing center. It localises to the centrosome. The protein localises to the spindle. The protein resides in the nucleus. Its activity is regulated as follows. GTPase-activating activity is inhibited in the folliculin complex (LFC), which stabilizes the GDP-bound state of RagA/RRAGA (or RagB/RRAGB), because Arg-164 is located far from the RagC/RRAGC or RagD/RRAGD nucleotide pocket. Disassembly of the LFC complex upon amino acid restimulation liberates the GTPase-activating activity. Multi-functional protein, involved in both the cellular response to amino acid availability and in the regulation of glycolysis. GTPase-activating protein that plays a key role in the cellular response to amino acid availability through regulation of the non-canonical mTORC1 signaling cascade controlling the MiT/TFE factors TFEB and TFE3. Activates mTORC1 by acting as a GTPase-activating protein: specifically stimulates GTP hydrolysis by RagC/RRAGC or RagD/RRAGD, promoting the conversion to the GDP-bound state of RagC/RRAGC or RagD/RRAGD, and thereby activating the kinase activity of mTORC1. The GTPase-activating activity is inhibited during starvation and activated in presence of nutrients. Acts as a key component for non-canonical mTORC1-dependent control of the MiT/TFE factors TFEB and TFE3, while it is not involved in mTORC1-dependent phosphorylation of canonical RPS6KB1/S6K1 and EIF4EBP1/4E-BP1. In low-amino acid conditions, the lysosomal folliculin complex (LFC) is formed on the membrane of lysosomes, which inhibits the GTPase-activating activity of FLCN, inactivates mTORC1 and maximizes nuclear translocation of TFEB and TFE3. Upon amino acid restimulation, RagA/RRAGA (or RagB/RRAGB) nucleotide exchange promotes disassembly of the LFC complex and liberates the GTPase-activating activity of FLCN, leading to activation of mTORC1 and subsequent cytoplasmic retention of TFEB and TFE3. Indirectly acts as a positive regulator of Wnt signaling by promoting mTOR-dependent cytoplasmic retention of MiT/TFE factor TFE3. Required for the exit of hematopoietic stem cell from pluripotency by promoting mTOR-dependent cytoplasmic retention of TFE3, thereby increasing Wnt signaling. Involved in the control of embryonic stem cells differentiation; together with LAMTOR1 it is necessary to recruit and activate RagC/RRAGC and RagD/RRAGD at the lysosomes, and to induce exit of embryonic stem cells from pluripotency via non-canonical, mTOR-independent TFE3 inactivation. Acts as an inhibitor of browning of adipose tissue by regulating mTOR-dependent cytoplasmic retention of TFE3. In response to flow stress, regulates STK11/LKB1 accumulation and mTORC1 activation through primary cilia: may act by recruiting STK11/LKB1 to primary cilia for activation of AMPK resided at basal bodies, causing mTORC1 down-regulation. Together with FNIP1 and/or FNIP2, regulates autophagy: following phosphorylation by ULK1, interacts with GABARAP and promotes autophagy. Required for starvation-induced perinuclear clustering of lysosomes by promoting association of RILP with its effector RAB34. Regulates glycolysis by binding to lactate dehydrogenase LDHA, acting as an uncompetitive inhibitor. This is Folliculin from Mus musculus (Mouse).